A 222-amino-acid polypeptide reads, in one-letter code: Histidine biosynthesis bifunctional protein HisIE (222 aa).

A phosphoribosyl-AMP cyclohydrolase region spans residues 1–128 (MQPLSPAFID…SNALSPPADA (128 aa)). Residues 129-222 (CTELFRVIES…AARRGAPRRH (94 aa)) are phosphoribosyl-ATP pyrophosphohydrolase.

The protein in the N-terminal section; belongs to the PRA-CH family. This sequence in the C-terminal section; belongs to the PRA-PH family.

The protein localises to the cytoplasm. It carries out the reaction 1-(5-phospho-beta-D-ribosyl)-ATP + H2O = 1-(5-phospho-beta-D-ribosyl)-5'-AMP + diphosphate + H(+). The catalysed reaction is 1-(5-phospho-beta-D-ribosyl)-5'-AMP + H2O = 1-(5-phospho-beta-D-ribosyl)-5-[(5-phospho-beta-D-ribosylamino)methylideneamino]imidazole-4-carboxamide. It functions in the pathway amino-acid biosynthesis; L-histidine biosynthesis; L-histidine from 5-phospho-alpha-D-ribose 1-diphosphate: step 2/9. It participates in amino-acid biosynthesis; L-histidine biosynthesis; L-histidine from 5-phospho-alpha-D-ribose 1-diphosphate: step 3/9. The polypeptide is Histidine biosynthesis bifunctional protein HisIE (Parasynechococcus marenigrum (strain WH8102)).